The sequence spans 513 residues: Fructose import ATP-binding protein FruK (513 aa).

2 consecutive ABC transporter domains span residues 8 to 244 (VVMK…IGKS) and 262 to 505 (PGEK…IANT). Position 40 to 47 (40 to 47 (GENGAGKS)) interacts with ATP.

It belongs to the ABC transporter superfamily. In terms of assembly, the complex is composed of an ATP-binding protein (FruK), two transmembrane proteins (FruF and FruG) and a solute-binding protein (FruE).

Its subcellular location is the cell membrane. The catalysed reaction is D-fructose(out) + ATP + H2O = D-fructose(in) + ADP + phosphate + H(+). Functionally, part of the high-affinity ABC transporter complex FruEKFG involved in fructose uptake. Can also transport ribose and xylose, with lower affinity. Probably responsible for energy coupling to the transport system. This is Fructose import ATP-binding protein FruK from Bifidobacterium longum (strain NCC 2705).